The following is a 518-amino-acid chain: MNKKYFVLIVCIIFTSALFPTFSSVTAAQGEAVIATDEMNVRSGPGLSYGITAEVKKGERYPILKEDGDWVQIQLGSGEKGWVVSWLITKEDQASTSSSGSSDTVTSTDPDLRMRSGPGTSYEVIGKFPQGSQASVIDKDSGWIKISYHSATGWVSSEYVTSGGSSSASDESDQTEDSGASTTGTVGVSSLNVRASASHDAAIITKLDRGTKLTVLNEKNGWAHIEVNGLKGWVASHYLLTSSVPADDSANAGSSSSAKKAYIMYGGTNLRSDASTSASIVERAAKGDSYTITGSKGSWYEIKLDNGQTAYVANWVVQTSKSAEEAGEPPVSDSPSGNGSLNNKTIIVDPGHGGKDSGTIGYSGKFEKNLTIKTAKLLASKLRSAGADVYVTRQDDTFVSLQSRVSTSHYRNADAFISIHYDSYADTSTRGSTAYYYSPAKDQELASDVHSEVVKRSSIPDRGVLFGDYYVLRENRQPAMLYELGYVSHPQEEAIVHSNSYQEKVTDGIESGLEKYFQ.

Residues 1–27 (MNKKYFVLIVCIIFTSALFPTFSSVTA) form the signal peptide. SH3b domains are found at residues 29 to 91 (QGEA…ITKE), 102 to 164 (SDTV…TSGG), 181 to 243 (STTG…LTSS), and 258 to 320 (AKKA…VQTS). Disordered regions lie at residues 94-121 (ASTSSSGSSDTVTSTDPDLRMRSGPGTS) and 160-186 (VTSGGSSSASDESDQTEDSGASTTGTV). Composition is skewed to low complexity over residues 95 to 108 (STSSSGSSDTVTST) and 160 to 169 (VTSGGSSSAS). Residues 322-352 (SAEEAGEPPVSDSPSGNGSLNNKTIIVDPGH) form a disordered region. Residues 333–345 (DSPSGNGSLNNKT) show a composition bias toward polar residues. The 169-residue stretch at 346–514 (IIVDPGHGGK…VTDGIESGLE (169 aa)) folds into the MurNAc-LAA domain.

This sequence belongs to the N-acetylmuramoyl-L-alanine amidase 3 family.

It localises to the secreted. Its subcellular location is the cell wall. The enzyme catalyses Hydrolyzes the link between N-acetylmuramoyl residues and L-amino acid residues in certain cell-wall glycopeptides.. Probably involved in cell-wall metabolism. The chain is Putative N-acetylmuramoyl-L-alanine amidase YrvJ (yrvJ) from Bacillus subtilis (strain 168).